We begin with the raw amino-acid sequence, 295 residues long: Shikimate dehydrogenase (NADP(+)) (295 aa).

Shikimate is bound by residues 21–23 and T68; that span reads SLS. K72 (proton acceptor) is an active-site residue. Shikimate is bound by residues N93 and D108. Residues 132-136, 156-161, and L228 each bind NADP(+); these read GAGGA and NRTPER. Position 230 (Y230) interacts with shikimate. Position 251 (G251) interacts with NADP(+).

It belongs to the shikimate dehydrogenase family. Homodimer.

It carries out the reaction shikimate + NADP(+) = 3-dehydroshikimate + NADPH + H(+). It participates in metabolic intermediate biosynthesis; chorismate biosynthesis; chorismate from D-erythrose 4-phosphate and phosphoenolpyruvate: step 4/7. Its function is as follows. Involved in the biosynthesis of the chorismate, which leads to the biosynthesis of aromatic amino acids. Catalyzes the reversible NADPH linked reduction of 3-dehydroshikimate (DHSA) to yield shikimate (SA). This is Shikimate dehydrogenase (NADP(+)) from Moorella thermoacetica (strain ATCC 39073 / JCM 9320).